The primary structure comprises 416 residues: ABSCISIC ACID-INSENSITIVE 5-like protein 5 (416 aa).

Residues 1 to 23 (MDGSMNLGNEPPGDGGGGGGLTR) are disordered. The span at 13 to 22 (GDGGGGGGLT) shows a compositional bias: gly residues. A phosphoserine mark is found at Ser26, Ser45, and Ser86. Thr135 carries the post-translational modification Phosphothreonine. Residues 300–326 (SEGIGKSNGDSSSLSPSPYMFNGGVRG) form a disordered region. A bZIP domain is found at 336-399 (VERRQRRMIK…KNQETEMRNL (64 aa)). The segment at 338 to 357 (RRQRRMIKNRESAARSRARK) is basic motif. The tract at residues 364 to 385 (LEAEVAKLKEENDELQRKQARI) is leucine-zipper. Residues 388–416 (MQKNQETEMRNLLQGGPKKKLRRTESGPW) form a disordered region.

This sequence belongs to the bZIP family. ABI5 subfamily. DNA-binding heterodimer. Interacts with ARIA. The activation by phosphorylation is induced by abscisic acid (ABA). Phosphorylated by SRK2C, SRK2D, SRK2E, SRK2F and SRK2I in vitro. Expressed in roots, leaves, flowers and siliques but not in seeds.

Its subcellular location is the nucleus. Involved in ABA and stress responses and acts as a positive component of glucose signal transduction. Functions as a transcriptional activator in the ABA-inducible expression of rd29B. Binds specifically to the ABA-responsive element (ABRE) of the rd29B gene promoter. This Arabidopsis thaliana (Mouse-ear cress) protein is ABSCISIC ACID-INSENSITIVE 5-like protein 5 (ABF2).